A 289-amino-acid polypeptide reads, in one-letter code: Protoheme IX farnesyltransferase (289 aa).

9 consecutive transmembrane segments (helical) span residues 9 to 29, 40 to 60, 89 to 109, 110 to 130, 134 to 154, 155 to 175, 190 to 209, 228 to 248, and 269 to 289; these read VALM…PVMM, LIAV…TINC, LTFG…LVNW, PSAL…TLGL, TPSN…IGWS, AVTG…FFWT, YAAA…VVTR, VAST…WFLV, and FHMS…TALV.

Belongs to the UbiA prenyltransferase family. Protoheme IX farnesyltransferase subfamily.

Its subcellular location is the cell membrane. The catalysed reaction is heme b + (2E,6E)-farnesyl diphosphate + H2O = Fe(II)-heme o + diphosphate. The protein operates within porphyrin-containing compound metabolism; heme O biosynthesis; heme O from protoheme: step 1/1. Converts heme B (protoheme IX) to heme O by substitution of the vinyl group on carbon 2 of heme B porphyrin ring with a hydroxyethyl farnesyl side group. The chain is Protoheme IX farnesyltransferase from Frankia casuarinae (strain DSM 45818 / CECT 9043 / HFP020203 / CcI3).